Here is a 393-residue protein sequence, read N- to C-terminus: Acetate kinase (393 aa).

Asn10 is a Mg(2+) binding site. Lys17 contributes to the ATP binding site. Substrate is bound at residue Arg89. The Proton donor/acceptor role is filled by Asp146. ATP contacts are provided by residues 204–208 (HLGNG), 278–280 (DMR), and 323–327 (GVGEN). Glu376 is a Mg(2+) binding site.

Belongs to the acetokinase family. Homodimer. It depends on Mg(2+) as a cofactor. Mn(2+) is required as a cofactor.

Its subcellular location is the cytoplasm. The catalysed reaction is acetate + ATP = acetyl phosphate + ADP. Its pathway is metabolic intermediate biosynthesis; acetyl-CoA biosynthesis; acetyl-CoA from acetate: step 1/2. Its function is as follows. Catalyzes the formation of acetyl phosphate from acetate and ATP. Can also catalyze the reverse reaction. The chain is Acetate kinase from Mycoplasma genitalium (strain ATCC 33530 / DSM 19775 / NCTC 10195 / G37) (Mycoplasmoides genitalium).